The chain runs to 155 residues: Antitoxin HicB 1 (155 aa).

Positions 99 to 153 constitute an HTH cro/C1-type domain; the sequence is MLNAFLDSKLTQIELANRMGVKKQEVTRIFDLRHSTKIDTVGKVASAIGHQLTLS. The segment at residues 110–129 is a DNA-binding region (H-T-H motif); that stretch reads QIELANRMGVKKQEVTRIFD.

This sequence belongs to the HicB antitoxin family. Probably forms a complex with the probable mRNA interferase HicA1 (its cognate toxin); when complexed with HicA 1 inhibits the toxin activity.

Functionally, antitoxin component of a type II toxin-antitoxin (TA) system. Functions as an mRNA interferase antitoxin preventing effects of the HicA 1 toxin. This Photorhabdus laumondii subsp. laumondii (strain DSM 15139 / CIP 105565 / TT01) (Photorhabdus luminescens subsp. laumondii) protein is Antitoxin HicB 1 (hicB1).